Consider the following 922-residue polypeptide: Lysine-specific demethylase 7A (922 aa).

The segment at 6–57 (PVYCVCRQPYDVSRFMIECDICKDWFHSSCVKVEEHQAADIDLYHCPNCEVL) adopts a PHD-type zinc-finger fold. Positions 199-355 (FSDTKMADLV…MQLRCYEMEK (157 aa)) constitute a JmjC domain. Threonine 248 is a binding site for substrate. Fe cation-binding residues include histidine 251 and aspartate 253. Lysine 268 lines the substrate pocket. Position 323 (histidine 323) interacts with Fe cation. 5 disordered regions span residues 445 to 490 (EEEG…TKTP), 565 to 607 (RSLY…TQKP), 622 to 711 (GSSE…EQEA), 754 to 773 (GKEH…HHVK), and 872 to 902 (LHPT…MATA). Basic residues predominate over residues 473–483 (HHSGRKARRLR). Residues 648 to 666 (ESESSGDDDDEEEEEEEER) are compositionally biased toward acidic residues. Basic and acidic residues-rich tracts occupy residues 667-683 (QEPI…RRLP) and 691-701 (PDHDSPQKREC).

The protein belongs to the JHDM1 histone demethylase family. JHDM1D subfamily. It depends on Fe(2+) as a cofactor.

The protein resides in the nucleus. Histone demethylase required for brain development. Specifically demethylates dimethylated 'Lys-9' and 'Lys-27' (H3K9me2 and H3K27me2, respectively) of histone H3 and monomethylated histone H4 'Lys-20' residue (H4K20Me1), thereby playing a central role in histone code. The protein is Lysine-specific demethylase 7A (kdm7a) of Xenopus tropicalis (Western clawed frog).